The primary structure comprises 301 residues: Heme A synthase (301 aa).

At 1–7 (MHKGLKR) the chain is on the cytoplasmic side. The helical transmembrane segment at 8 to 28 (LGVITSLGVLLVLIQGALVTN) threads the bilayer. At 29–56 (TGSGEGCGQTWPLCFGQVIPLDPPPETV) the chain is on the extracellular side. Cysteine 35 and cysteine 42 form a disulfide bridge. Residues 57–77 (IEFSHRLVAGIVGMLVILMAI) form a helical membrane-spanning segment. The active site involves glutamate 58. Residue histidine 61 participates in heme o binding. The Cytoplasmic segment spans residues 78–92 (WSWRRLKHMPETRFL). The helical transmembrane segment at 93–113 (AVISVFMIIFQGLLGAGAVVF) threads the bilayer. Residues 114-117 (GQSD) lie on the Extracellular side of the membrane. A helical membrane pass occupies residues 118-138 (LIMALHFGFSALSFASVVLLT). Residue histidine 123 participates in heme o binding. Residues 139-159 (RLAFEDSNPQKQYAPIVSKAY) lie on the Cytoplasmic side of the membrane. Residues 160 to 180 (KGYVIFVAIYSYVAIYTGAYV) traverse the membrane as a helical segment. Residues 181–215 (KHTNATLACSGFPLCNGQWVPDVFTEAIGVQLLHR) lie on the Extracellular side of the membrane. Cysteine 189 and cysteine 195 are joined by a disulfide. Residue histidine 214 coordinates heme b. Residues 216–236 (SAAILLSLLLLVLFIWTVKTF) traverse the membrane as a helical segment. Over 237–240 (RASR) the chain is Cytoplasmic. A helical transmembrane segment spans residues 241–261 (VLVVCASLAMLLVIGQAASGV). Residues 262–274 (AVVLTYNATLTLG) lie on the Extracellular side of the membrane. Residues 275 to 295 (IFHALLISLLFTLLCYMVMLV) form a helical membrane-spanning segment. Histidine 277 contributes to the heme b binding site. The Cytoplasmic segment spans residues 296–301 (TRHKAK).

The protein belongs to the COX15/CtaA family. Type 1 subfamily. As to quaternary structure, interacts with CtaB. Heme b is required as a cofactor.

The protein localises to the cell membrane. The catalysed reaction is Fe(II)-heme o + 2 A + H2O = Fe(II)-heme a + 2 AH2. The protein operates within porphyrin-containing compound metabolism; heme A biosynthesis; heme A from heme O: step 1/1. Functionally, catalyzes the conversion of heme O to heme A by two successive hydroxylations of the methyl group at C8. The first hydroxylation forms heme I, the second hydroxylation results in an unstable dihydroxymethyl group, which spontaneously dehydrates, resulting in the formyl group of heme A. The protein is Heme A synthase of Shouchella clausii (strain KSM-K16) (Alkalihalobacillus clausii).